A 307-amino-acid polypeptide reads, in one-letter code: NAD kinase (307 aa).

Asp-80 (proton acceptor) is an active-site residue. NAD(+) contacts are provided by residues 80 to 81, His-85, 154 to 155, His-165, His-182, Asp-184, 195 to 200, and Gln-254; these read DG, ND, and TAYALS.

It belongs to the NAD kinase family. It depends on a divalent metal cation as a cofactor.

The protein resides in the cytoplasm. The catalysed reaction is NAD(+) + ATP = ADP + NADP(+) + H(+). Functionally, involved in the regulation of the intracellular balance of NAD and NADP, and is a key enzyme in the biosynthesis of NADP. Catalyzes specifically the phosphorylation on 2'-hydroxyl of the adenosine moiety of NAD to yield NADP. This chain is NAD kinase, found in Acinetobacter baylyi (strain ATCC 33305 / BD413 / ADP1).